A 216-amino-acid chain; its full sequence is MRLSALLALASKATSSPFYRYGMSRPGSIADKRKNPPWSRRRPVVVEPISDEDWHLFCGDMVEILEGKDAGKQGKVVQVVRQRNWVVLEGLNTHYRYIGRTKDHRGTMIASEAPLLHHQVKLVDPVDRKPTEIQWRFTEAGERVRVSTRSGRIIPKPEFPRADGIVPETWTDGPKDTSVEDALERTYVPRLKTLEEDVMEAMGIQETRRFKKVYWY.

A mitochondrion-targeting transit peptide spans 1-9; that stretch reads MRLSALLAL. Residue S24 is modified to Phosphoserine. Positions 56–89 constitute a KOW domain; that stretch reads LFCGDMVEILEGKDAGKQGKVVQVVRQRNWVVLE.

Belongs to the universal ribosomal protein uL24 family. As to quaternary structure, component of the mitochondrial ribosome large subunit (39S) which comprises a 16S rRNA and about 50 distinct proteins.

The protein localises to the mitochondrion. In Mus musculus (Mouse), this protein is Large ribosomal subunit protein uL24m (Mrpl24).